A 1097-amino-acid polypeptide reads, in one-letter code: DNA polymerase catalytic subunit (1097 aa).

The tract at residues 1069–1097 is disordered; the sequence is RGGDDSDGGDSEKENMDTERSSSHEAMET. Residues 1078–1097 are compositionally biased toward basic and acidic residues; that stretch reads DSEKENMDTERSSSHEAMET.

The protein belongs to the DNA polymerase type-B family.

The protein localises to the host nucleus. The enzyme catalyses DNA(n) + a 2'-deoxyribonucleoside 5'-triphosphate = DNA(n+1) + diphosphate. The sequence is that of DNA polymerase catalytic subunit (UL54) from Murid herpesvirus 1 (strain Smith) (MuHV-1).